The chain runs to 102 residues: Cytochrome b (102 aa).

3 helical membrane-spanning segments follow: residues 1–21 (FGSL…FLAM), 45–66 (WLMR…FLHI), and 81–101 (WNIG…GYVL). Residues His51 and His65 each contribute to the heme b site.

It belongs to the cytochrome b family. As to quaternary structure, the cytochrome bc1 complex contains 3 respiratory subunits (MT-CYB, CYC1 and UQCRFS1), 2 core proteins (UQCRC1 and UQCRC2) and probably 6 low-molecular weight proteins. Heme b is required as a cofactor.

The protein resides in the mitochondrion inner membrane. In terms of biological role, component of the ubiquinol-cytochrome c reductase complex (complex III or cytochrome b-c1 complex) that is part of the mitochondrial respiratory chain. The b-c1 complex mediates electron transfer from ubiquinol to cytochrome c. Contributes to the generation of a proton gradient across the mitochondrial membrane that is then used for ATP synthesis. This chain is Cytochrome b (mt-cyb), found in Ambystoma tigrinum (Eastern tiger salamander).